The sequence spans 100 residues: NADH-quinone oxidoreductase subunit K 2 (100 aa).

Transmembrane regions (helical) follow at residues 4–24, 29–49, and 60–80; these read LHSY…GVLI, IVIF…FIAL, and IFVF…LALM.

Belongs to the complex I subunit 4L family. As to quaternary structure, NDH-1 is composed of 14 different subunits. Subunits NuoA, H, J, K, L, M, N constitute the membrane sector of the complex.

It localises to the cell inner membrane. It catalyses the reaction a quinone + NADH + 5 H(+)(in) = a quinol + NAD(+) + 4 H(+)(out). Functionally, NDH-1 shuttles electrons from NADH, via FMN and iron-sulfur (Fe-S) centers, to quinones in the respiratory chain. The immediate electron acceptor for the enzyme in this species is believed to be ubiquinone. Couples the redox reaction to proton translocation (for every two electrons transferred, four hydrogen ions are translocated across the cytoplasmic membrane), and thus conserves the redox energy in a proton gradient. This Geobacter metallireducens (strain ATCC 53774 / DSM 7210 / GS-15) protein is NADH-quinone oxidoreductase subunit K 2.